The sequence spans 404 residues: Phosphopentomutase (404 aa).

Mn(2+) is bound by residues Asp10, Asp303, His308, Asp344, His345, and His356.

It belongs to the phosphopentomutase family. It depends on Mn(2+) as a cofactor.

Its subcellular location is the cytoplasm. The catalysed reaction is 2-deoxy-alpha-D-ribose 1-phosphate = 2-deoxy-D-ribose 5-phosphate. It carries out the reaction alpha-D-ribose 1-phosphate = D-ribose 5-phosphate. It participates in carbohydrate degradation; 2-deoxy-D-ribose 1-phosphate degradation; D-glyceraldehyde 3-phosphate and acetaldehyde from 2-deoxy-alpha-D-ribose 1-phosphate: step 1/2. Its function is as follows. Isomerase that catalyzes the conversion of deoxy-ribose 1-phosphate (dRib-1-P) and ribose 1-phosphate (Rib-1-P) to deoxy-ribose 5-phosphate (dRib-5-P) and ribose 5-phosphate (Rib-5-P), respectively. The chain is Phosphopentomutase from Shewanella sp. (strain W3-18-1).